Here is a 1741-residue protein sequence, read N- to C-terminus: S-layer protein (1741 aa).

Residues 894-904 show a composition bias toward polar residues; it reads SFTSDSANGSG. Residues 894–913 are disordered; the sequence is SFTSDSANGSGHSVEGGTGD.

In terms of processing, glycosylated.

Its subcellular location is the secreted. It is found in the cell wall. It localises to the S-layer. S-layer protein. The S-layer is a paracrystalline mono-layered assembly of proteins which coats the surface of bacteria. Under laboratory conditions, has a supportive but not a critical role in the function of the cyanobacterium. Shows no apparent hemolytic activity against sheep erythrocytes, however, a slight hemolytic activity is detected during the conformational change caused by the rebinding of Ca(2+). The chain is S-layer protein from Synechocystis sp. (strain ATCC 27184 / PCC 6803 / Kazusa).